A 599-amino-acid chain; its full sequence is Cytosolic Fe-S cluster assembly factor nar1 (599 aa).

The [4Fe-4S] cluster site is built by cysteine 20, cysteine 62, cysteine 65, cysteine 68, cysteine 210, cysteine 265, cysteine 468, and cysteine 472.

It belongs to the NARF family.

Functionally, component of the cytosolic Fe/S protein assembly machinery. Required for maturation of extramitochondrial Fe/S proteins. May play a role in the transfer of pre-assembled Fe/S clusters to target apoproteins. This Aspergillus terreus (strain NIH 2624 / FGSC A1156) protein is Cytosolic Fe-S cluster assembly factor nar1 (nar1).